The chain runs to 483 residues: Glutamyl-tRNA(Gln) amidotransferase subunit A (483 aa).

Active-site charge relay system residues include K76 and S151. S175 acts as the Acyl-ester intermediate in catalysis.

Belongs to the amidase family. GatA subfamily. Heterotrimer of A, B and C subunits.

The enzyme catalyses L-glutamyl-tRNA(Gln) + L-glutamine + ATP + H2O = L-glutaminyl-tRNA(Gln) + L-glutamate + ADP + phosphate + H(+). Functionally, allows the formation of correctly charged Gln-tRNA(Gln) through the transamidation of misacylated Glu-tRNA(Gln) in organisms which lack glutaminyl-tRNA synthetase. The reaction takes place in the presence of glutamine and ATP through an activated gamma-phospho-Glu-tRNA(Gln). This is Glutamyl-tRNA(Gln) amidotransferase subunit A from Azotobacter vinelandii (strain DJ / ATCC BAA-1303).